Here is a 340-residue protein sequence, read N- to C-terminus: Phosphoribosylformylglycinamidine cyclo-ligase (340 aa).

Belongs to the AIR synthase family.

The protein localises to the cytoplasm. It carries out the reaction 2-formamido-N(1)-(5-O-phospho-beta-D-ribosyl)acetamidine + ATP = 5-amino-1-(5-phospho-beta-D-ribosyl)imidazole + ADP + phosphate + H(+). Its pathway is purine metabolism; IMP biosynthesis via de novo pathway; 5-amino-1-(5-phospho-D-ribosyl)imidazole from N(2)-formyl-N(1)-(5-phospho-D-ribosyl)glycinamide: step 2/2. This Streptococcus pneumoniae serotype 2 (strain D39 / NCTC 7466) protein is Phosphoribosylformylglycinamidine cyclo-ligase.